A 387-amino-acid polypeptide reads, in one-letter code: MFDLARQTRIILLLGIDVTFFFIEIITGYAIDSLALIADSFHMLNDIVSLLVALWATRLAHSTSHEPKYTYGWQRAEILGALSNGVFLIALCMFIFMEAIERFIEPPSVSNPTLMFFVGSLGLLSNFVGIFLFHDHGHDHPHTHTAQNYDFPEEDDIESVLPSTIVHRCNTSQQEVSHTHTQVADSATESSPLLSYTGNHNGAGTSKPVNNHGSIEQDAPKQTKKRNLNMHGVFLHVLGDALGNIGVISAALFIKYTDYSWRFLFDPCISILLTFIILFSAIPLCKSAALILLQVAPQSIKLDDVSNLINHLDGVESVHELHIWQLSDVKLIATVHVCVTLPDDKGESYTKLTTDIRNVLQSFGIYDVTIQPEFANHPLLCDQGSSS.

Transmembrane regions (helical) follow at residues 10 to 30 (IILL…TGYA), 34 to 54 (LALI…LVAL), 77 to 97 (EILG…FIFM), and 113 to 133 (TLMF…IFLF). A compositionally biased stretch (polar residues) spans 195-214 (SYTGNHNGAGTSKPVNNHGS). The tract at residues 195–221 (SYTGNHNGAGTSKPVNNHGSIEQDAPK) is disordered. The next 2 membrane-spanning stretches (helical) occupy residues 234 to 254 (FLHV…ALFI) and 263 to 283 (FLFD…SAIP).

The protein belongs to the cation diffusion facilitator (CDF) transporter (TC 2.A.4) family. SLC30A subfamily.

The protein resides in the endoplasmic reticulum membrane. Its subcellular location is the nucleus membrane. Functionally, involved in zinc homeostasis, where it plays a role in its accumulation in the endoplasmic reticulum/nucleus. Also has a role in the sequestration of cadmium into the endoplasmic reticulum. In Schizosaccharomyces pombe (strain 972 / ATCC 24843) (Fission yeast), this protein is Zinc homeostasis factor 1 (zhf1).